Here is a 120-residue protein sequence, read N- to C-terminus: Large ribosomal subunit protein uL18 (120 aa).

It belongs to the universal ribosomal protein uL18 family. Part of the 50S ribosomal subunit; part of the 5S rRNA/L5/L18/L25 subcomplex. Contacts the 5S and 23S rRNAs.

This is one of the proteins that bind and probably mediate the attachment of the 5S RNA into the large ribosomal subunit, where it forms part of the central protuberance. The sequence is that of Large ribosomal subunit protein uL18 from Treponema pallidum (strain Nichols).